The following is a 328-amino-acid chain: V-set and immunoglobulin domain-containing protein 2 (328 aa).

The first 24 residues, 1-24, serve as a signal peptide directing secretion; that stretch reads MAWPLVGAFLCGHLLGFVCLSGLA. The region spanning 25 to 138 is the Ig-like V-type domain; that stretch reads VEVTVPTEPL…DFYTNGLGLI (114 aa). Residues 25 to 244 are Extracellular-facing; it reads VEVTVPTEPL…VTDSSEGRVA (220 aa). A disulfide bond links Cys46 and Cys122. 3 N-linked (GlcNAc...) asparagine glycosylation sites follow: Asn139, Asn207, and Asn232. The 90-residue stretch at 145–234 folds into the Ig-like C2-type domain; sequence PPSHPLCSQS…GSASCELNLS (90 aa). Residues Cys167 and Cys218 are joined by a disulfide bond. A helical membrane pass occupies residues 245 to 265; sequence GTLIGVLLGVLLLSVAAFCLI. Residues 266-328 are Cytoplasmic-facing; it reads RFQKERKKEP…TTKSKLSMVV (63 aa).

As to expression, expressed in the stomach, colon and prostate.

It is found in the membrane. The protein is V-set and immunoglobulin domain-containing protein 2 (Vsig2) of Mus musculus (Mouse).